A 232-amino-acid chain; its full sequence is Ribose-5-phosphate isomerase A (232 aa).

Substrate is bound by residues 28–31, 83–86, and 96–99; these read TGST, DGAD, and KGGG. Glu105 (proton acceptor) is an active-site residue. Lys123 contributes to the substrate binding site.

It belongs to the ribose 5-phosphate isomerase family. In terms of assembly, homodimer.

It catalyses the reaction aldehydo-D-ribose 5-phosphate = D-ribulose 5-phosphate. Its pathway is carbohydrate degradation; pentose phosphate pathway; D-ribose 5-phosphate from D-ribulose 5-phosphate (non-oxidative stage): step 1/1. Its function is as follows. Catalyzes the reversible conversion of ribose-5-phosphate to ribulose 5-phosphate. The protein is Ribose-5-phosphate isomerase A of Rhodopseudomonas palustris (strain ATCC BAA-98 / CGA009).